Consider the following 122-residue polypeptide: MARIAGINVPVKKCVPFALTYIHGIGITTANIICRSCKIDERKRVLELQDEDIEKISSFIRQKYVIEGELRKKVAMDIKSLMEIGCYRGLRHRKGLPVRGQRTHTNAKTRKGRSKLPIAGKK.

The tract at residues 97–122 is disordered; it reads PVRGQRTHTNAKTRKGRSKLPIAGKK.

It belongs to the universal ribosomal protein uS13 family. As to quaternary structure, part of the 30S ribosomal subunit. Forms a loose heterodimer with protein S19. Forms two bridges to the 50S subunit in the 70S ribosome.

Located at the top of the head of the 30S subunit, it contacts several helices of the 16S rRNA. In the 70S ribosome it contacts the 23S rRNA (bridge B1a) and protein L5 of the 50S subunit (bridge B1b), connecting the 2 subunits; these bridges are implicated in subunit movement. Contacts the tRNAs in the A and P-sites. The sequence is that of Small ribosomal subunit protein uS13 from Wolbachia pipientis subsp. Culex pipiens (strain wPip).